We begin with the raw amino-acid sequence, 185 residues long: Ribosome-recycling factor (185 aa).

This sequence belongs to the RRF family.

It localises to the cytoplasm. In terms of biological role, responsible for the release of ribosomes from messenger RNA at the termination of protein biosynthesis. May increase the efficiency of translation by recycling ribosomes from one round of translation to another. This is Ribosome-recycling factor from Shewanella halifaxensis (strain HAW-EB4).